The primary structure comprises 654 residues: Probable potassium transport system protein Kup (654 aa).

The next 13 helical transmembrane spans lie at 17-37, 40-60, 71-91, 99-119, 137-157, 164-184, 202-222, 240-260, 281-301, 338-358, 369-389, 394-414, and 423-443; these read GILV…LYVM, IIGL…AIFW, VLIT…LYAL, WLII…IITP, INTV…QQFG, FFAP…ILQI, LLSI…CTTG, ISWI…GAYL, LVMP…AAVI, IYIP…VLHF, GLAI…FMIL, WFII…FLIA, and GYVT…WYTA.

It belongs to the HAK/KUP transporter (TC 2.A.72) family.

The protein resides in the cell inner membrane. It catalyses the reaction K(+)(in) + H(+)(in) = K(+)(out) + H(+)(out). Its function is as follows. Transport of potassium into the cell. Likely operates as a K(+):H(+) symporter. The sequence is that of Probable potassium transport system protein Kup from Flavobacterium psychrophilum (strain ATCC 49511 / DSM 21280 / CIP 103535 / JIP02/86).